A 504-amino-acid polypeptide reads, in one-letter code: Sperm motility kinase 2A (504 aa).

The 249-residue stretch at 28–276 folds into the Protein kinase domain; it reads YEMLGTIGHG…VAEVMMHPWV (249 aa). ATP-binding positions include 34–42 and Lys-57; that span reads IGHGGSTKV. The active-site Proton acceptor is the Asp-147. The 41-residue stretch at 294 to 334 folds into the UBA domain; sequence KPDPAIVKAMGHIGFQAQDIEDSLRQRKFNETMASYCLLKK. Polar residues-rich tracts occupy residues 376 to 393 and 443 to 454; these read PTSLRLSANRQMSVCGRS and SDESTEGHTSAS. 2 disordered regions span residues 376 to 403 and 443 to 469; these read PTSLRLSANRQMSVCGRSTSKKRDRSFS and SDESTEGHTSASAEDKPVRSRGWPRGI.

This sequence belongs to the protein kinase superfamily. CAMK Ser/Thr protein kinase family. Smok subfamily. As to expression, testis-specific. Expressed in the testis from 22 days postpartum (22 dpp).

It catalyses the reaction L-seryl-[protein] + ATP = O-phospho-L-seryl-[protein] + ADP + H(+). The enzyme catalyses L-threonyl-[protein] + ATP = O-phospho-L-threonyl-[protein] + ADP + H(+). Functionally, may play a role in sperm motility, especially in the regulation of flagellar function. The chain is Sperm motility kinase 2A (Smok2a) from Mus musculus (Mouse).